The sequence spans 145 residues: Large ribosomal subunit protein uL11 (145 aa).

This sequence belongs to the universal ribosomal protein uL11 family. In terms of assembly, part of the ribosomal stalk of the 50S ribosomal subunit. Interacts with L10 and the large rRNA to form the base of the stalk. L10 forms an elongated spine to which L12 dimers bind in a sequential fashion forming a multimeric L10(L12)X complex. Post-translationally, one or more lysine residues are methylated.

Its function is as follows. Forms part of the ribosomal stalk which helps the ribosome interact with GTP-bound translation factors. The protein is Large ribosomal subunit protein uL11 of Rickettsia typhi (strain ATCC VR-144 / Wilmington).